The primary structure comprises 778 residues: Centromere/kinetochore protein zw10 homolog (778 aa).

A coiled-coil region spans residues 47–99 (FDRLENLEDIAEMSTRNLSNLIDQTAKDSPEMLAEIKSQAQSCENLVEFLQSM).

It belongs to the ZW10 family. As to quaternary structure, component of the RZZ complex composed of rod-1, czw-1 and zwl-1.

Its subcellular location is the chromosome. The protein resides in the centromere. The protein localises to the kinetochore. It is found in the cytoplasm. It localises to the cytoskeleton. Its subcellular location is the spindle. Its function is as follows. Essential component of the mitotic checkpoint, which prevents cells from prematurely exiting mitosis. Required for the assembly of the dynein-dynactin and mdf-1-mdf-2 complexes onto kinetochores. Its function related to the spindle assembly machinery and kinetochore-microtubule attachments likely depends on its association in the mitotic RZZ complex. The RZZ complex recruits the spindly-like protein spdl-1 to kinetochores. To prevent irregular chromosome segregation, the complex also inhibits the attachment of the kinetochore-associated NDC80 complex to microtubules. The recruitment of spdl-1 to kinetochores relieves this inhibition. Required for embryonic development. This is Centromere/kinetochore protein zw10 homolog from Caenorhabditis elegans.